Reading from the N-terminus, the 581-residue chain is Arginine--tRNA ligase (581 aa).

The 'HIGH' region signature appears at 122-132; the sequence is PNVAKPMHVGH.

It belongs to the class-I aminoacyl-tRNA synthetase family. In terms of assembly, monomer.

The protein resides in the cytoplasm. The catalysed reaction is tRNA(Arg) + L-arginine + ATP = L-arginyl-tRNA(Arg) + AMP + diphosphate. This chain is Arginine--tRNA ligase, found in Francisella tularensis subsp. holarctica (strain FTNF002-00 / FTA).